A 1755-amino-acid polypeptide reads, in one-letter code: MESQQLSNYPHISHGSACASVTSKEVHTNQDPLDVSASKIQEYDKASTKANSQQTTTPASSAVPENPHHASPQPASVPPPQNGPYPQQCMMTQNQANPSGWSFYGHPSMIPYTPYQMSPMYFPPGPQSQFPQYPSSVGTPLSTPSPESGNTFTDSSSADSDMTSTKKYVRPPPMLTSPNDFPNWVKTYIKFLQNSNLGGIIPTVNGKPVRPITDDELTFLYNTFQIFAPSQFLPTWVKDILSVDYTDIMKILSKSIEKMQSDTQEANDIVTLANLQYNGSTPADAFETKVTNIIDRLNNNGIHINNKVACQLIMRGLSGEYKFLRYTRHRHLNMTVAELFLDIHAIYEEQQGSRNSKPNYRRNPSDEKNDSRSYTNTTKPKVIARNPQKTNNSKSKTARAHNVSTSNNSPSTDNDSISKSTTEPIQLNNKHDLHLGQKLTESTVNHTNHSDDELPGHLLLDSGASRTLIRSAHHIHSASSNPDINVVDAQKRNIPINAIGDLQFHFQDNTKTSIKVLHTPNIAYDLLSLNELAAVDITACFTKNVLERSDGTVLAPIVKYGDFYWVSKKYLLPSNISVPTINNVHTSESTRKYPYPFIHRMLAHANAQTIRYSLKNNTITYFNESDVDWSSAIDYQCPDCLIGKSTKHRHIKGSRLKYQNSYEPFQYLHTDIFGPVHNLPKSAPSYFISFTDETTKFRWVYPLHDRREDSILDVFTTILAFIKNQFQASVLVIQMDRGSEYTNRTLHKFLEKNGITPCYTTTADSRAHGVAERLNRTLLDDCRTQLQCSGLPNHLWFSAIEFSTIVRNSLASPKSKKSARQHAGLAGLDISTLLPFGQPVIVNDHNPNSKIHPRGIPGYALHPSRNSYGYIIYLPSLKKTVDTTNYVILQGKESRLDQFNYDALTFDEDLNRLTASYHSFIASNEIQESNDLNIESDHDFQSDIELHPEQPRNVLSKAVSPTDSTPPSTHTEDSKRVSKTNIRAPREVDPNISESNILPSKKRSSTPQISNIESTGSGGMHKLNVPLLAPMSQSNTHESSHASKSKDFRHSDSYSENETNHTNVPISSTGGTNNKTVPQISDQETEKRIIHRSPSIDASPPENNSSHNIVPIKTPTTVSEQNTEESIIADLPLPDLPPESPTEFPDPFKELPPINSRQTNSSLGGIGDSNAYTTINSKKRSLEDNETEIKVSRDTWNTKNMRSLEPPRSKKRIHLIAAVKAVKSIKPIRTTLRYDEAITYNKDIKEKEKYIEAYHKEVNQLLKMKTWDTDKYYDRKEIDPKRVINSMFIFNRKRDGTHKARFVARGDIQHPDTYDSGMQSNTVHHYALMTSLSLALDNNYYITQLDISSAYLYADIKEELYIRPPPHLGMNDKLIRLKKSLYGLKQSGANWYETIKSYLIKQCGMEEVRGWSCVFKNSQVTICLFVDDMILFSKDLNSNKRIIAKLKMQYDTKIINLGESDDEIQYDILGLEIKYQRGKYMKLGMENSLTEKIPKLNVPLNPNGRKLGAPGQPGLYINQQELELEEDDYKMKVHEMQKLIGLASYVGYKFRFDLLYYINTLAQHILFPSKQVLDMTYELIQFIWNTRDKQLIWHKSKPVKPTNKLVVISDASYGNQPYYKSQIGNIYLLNGKVIGGKSTKASLTCTSTTEAEIHAISESVPLLNNLSYLIQELDKKPITKGLLTDSKSTISIIISNNEEKFRNRFFGTKAMRLRDEVSGNHLHVCYIETKKNIADVMTKPLPIKTFKLLTNKWIH.

Composition is skewed to polar residues over residues 1–10 (MESQQLSNYP), 48–60 (TKAN…TPAS), and 127–152 (QSQF…GNTF). Disordered stretches follow at residues 1–93 (MESQ…MMTQ), 126–173 (PQSQ…RPPP), and 352–421 (GSRN…SKST). Positions 153–165 (TDSSSADSDMTST) are enriched in low complexity. The segment at 299–401 (NNGIHINNKV…NSKSKTARAH (103 aa)) is RNA-binding. Over residues 402-418 (NVSTSNNSPSTDNDSIS) the composition is skewed to low complexity. Residue serine 416 is modified to Phosphoserine. Aspartate 461 acts as the For protease activity; shared with dimeric partner in catalysis. The integrase-type zinc finger-like stretch occupies residues 583–640 (NVHTSESTRKYPYPFIHRMLAHANAQTIRYSLKNNTITYFNESDVDWSSAIDYQCPDC). Residues 660–835 (NSYEPFQYLH…AGLDISTLLP (176 aa)) enclose the Integrase catalytic domain. Mg(2+)-binding residues include aspartate 671 and aspartate 736. Disordered regions lie at residues 956-1087 (SKAV…ETEK), 1092-1111 (RSPS…NIVP), and 1130-1187 (DLPL…DNET). The span at 960-969 (SPTDSTPPST) shows a compositional bias: low complexity. Residues 1005–1015 (STPQISNIEST) show a composition bias toward polar residues. The segment covering 1038–1053 (ESSHASKSKDFRHSDS) has biased composition (basic and acidic residues). Polar residues-rich tracts occupy residues 1054-1082 (YSEN…QISD) and 1101-1111 (PENNSSHNIVP). Residues 1178–1212 (KKRSLEDNETEIKVSRDTWNTKNMRSLEPPRSKKR) carry the Bipartite nuclear localization signal motif. In terms of domain architecture, Reverse transcriptase Ty1/copia-type spans 1338-1476 (NNYYITQLDI…DILGLEIKYQ (139 aa)). Aspartate 1346, aspartate 1427, aspartate 1428, aspartate 1610, glutamate 1652, and aspartate 1685 together coordinate Mg(2+). The RNase H Ty1/copia-type domain occupies 1610–1752 (DASYGNQPYY…IKTFKLLTNK (143 aa)).

In terms of assembly, the capsid protein forms a homotrimer, from which the VLPs are assembled. The protease is a homodimer, whose active site consists of two apposed aspartic acid residues. Post-translationally, initially, virus-like particles (VLPs) are composed of the structural unprocessed proteins Gag and Gag-Pol, and also contain the host initiator methionine tRNA (tRNA(i)-Met) which serves as a primer for minus-strand DNA synthesis, and a dimer of genomic Ty RNA. Processing of the polyproteins occurs within the particle and proceeds by an ordered pathway, called maturation. First, the protease (PR) is released by autocatalytic cleavage of the Gag-Pol polyprotein yielding capsid protein p45 and a Pol-p154 precursor protein. This cleavage is a prerequisite for subsequent processing of Pol-p154 at the remaining sites to release the mature structural and catalytic proteins. Maturation takes place prior to the RT reaction and is required to produce transposition-competent VLPs.

It localises to the cytoplasm. It is found in the nucleus. It catalyses the reaction DNA(n) + a 2'-deoxyribonucleoside 5'-triphosphate = DNA(n+1) + diphosphate. The enzyme catalyses Endonucleolytic cleavage to 5'-phosphomonoester.. In terms of biological role, capsid protein (CA) is the structural component of the virus-like particle (VLP), forming the shell that encapsulates the retrotransposons dimeric RNA genome. The particles are assembled from trimer-clustered units and there are holes in the capsid shells that allow for the diffusion of macromolecules. CA also has nucleocapsid-like chaperone activity, promoting primer tRNA(i)-Met annealing to the multipartite primer-binding site (PBS), dimerization of Ty1 RNA and initiation of reverse transcription. Functionally, the aspartyl protease (PR) mediates the proteolytic cleavages of the Gag and Gag-Pol polyproteins after assembly of the VLP. Reverse transcriptase/ribonuclease H (RT) is a multifunctional enzyme that catalyzes the conversion of the retro-elements RNA genome into dsDNA within the VLP. The enzyme displays a DNA polymerase activity that can copy either DNA or RNA templates, and a ribonuclease H (RNase H) activity that cleaves the RNA strand of RNA-DNA heteroduplexes during plus-strand synthesis and hydrolyzes RNA primers. The conversion leads to a linear dsDNA copy of the retrotransposon that includes long terminal repeats (LTRs) at both ends. Its function is as follows. Integrase (IN) targets the VLP to the nucleus, where a subparticle preintegration complex (PIC) containing at least integrase and the newly synthesized dsDNA copy of the retrotransposon must transit the nuclear membrane. Once in the nucleus, integrase performs the integration of the dsDNA into the host genome. The sequence is that of Transposon Ty1-OR Gag-Pol polyprotein (TY1B-OR) from Saccharomyces cerevisiae (strain ATCC 204508 / S288c) (Baker's yeast).